The sequence spans 504 residues: ATP synthase subunit alpha, chloroplastic (504 aa).

170–177 (GDRQTGKT) serves as a coordination point for ATP. Threonine 257 is modified (phosphothreonine).

It belongs to the ATPase alpha/beta chains family. F-type ATPases have 2 components, CF(1) - the catalytic core - and CF(0) - the membrane proton channel. CF(1) has five subunits: alpha(3), beta(3), gamma(1), delta(1), epsilon(1). CF(0) has four main subunits: a, b, b' and c.

It localises to the plastid. It is found in the chloroplast thylakoid membrane. The enzyme catalyses ATP + H2O + 4 H(+)(in) = ADP + phosphate + 5 H(+)(out). Its function is as follows. Produces ATP from ADP in the presence of a proton gradient across the membrane. The alpha chain is a regulatory subunit. The protein is ATP synthase subunit alpha, chloroplastic of Nasturtium officinale (Watercress).